Consider the following 322-residue polypeptide: Homeobox protein DBX1-B (322 aa).

The homeobox DNA-binding region spans 179 to 238; the sequence is GMLRRAVFSDVQRKALEKMFQKQKYISKPDRKKLATKLGLKDSQVKIWFQNRRMKWRNSK. Disordered regions lie at residues 238–266 and 296–322; these read KERE…LSDV and DLHF…ITVS. Acidic residues predominate over residues 312–322; it reads SESEDEEITVS.

The protein belongs to the H2.0 homeobox family.

The protein resides in the nucleus. The polypeptide is Homeobox protein DBX1-B (dbx1b) (Danio rerio (Zebrafish)).